Consider the following 611-residue polypeptide: Oligoendopeptidase F homolog (611 aa).

His384 contributes to the Zn(2+) binding site. The active site involves Glu385. Zn(2+) is bound by residues His388 and His391.

The protein belongs to the peptidase M3B family. Zn(2+) is required as a cofactor.

In Mycoplasma pneumoniae (strain ATCC 29342 / M129 / Subtype 1) (Mycoplasmoides pneumoniae), this protein is Oligoendopeptidase F homolog (pepF).